The primary structure comprises 249 residues: Triosephosphate isomerase (249 aa).

9–11 (NWK) is a binding site for substrate. Catalysis depends on His-95, which acts as the Electrophile. Glu-165 serves as the catalytic Proton acceptor. Substrate is bound by residues Gly-171, Ser-210, and 231-232 (GG).

This sequence belongs to the triosephosphate isomerase family. In terms of assembly, homodimer.

It is found in the cytoplasm. It catalyses the reaction D-glyceraldehyde 3-phosphate = dihydroxyacetone phosphate. It functions in the pathway carbohydrate biosynthesis; gluconeogenesis. Its pathway is carbohydrate degradation; glycolysis; D-glyceraldehyde 3-phosphate from glycerone phosphate: step 1/1. Functionally, involved in the gluconeogenesis. Catalyzes stereospecifically the conversion of dihydroxyacetone phosphate (DHAP) to D-glyceraldehyde-3-phosphate (G3P). In Hyphomonas neptunium (strain ATCC 15444), this protein is Triosephosphate isomerase.